We begin with the raw amino-acid sequence, 447 residues long: Ribulose bisphosphate carboxylase large chain (447 aa).

Position 5 is an N6,N6,N6-trimethyllysine (lysine 5). The substrate site is built by asparagine 114 and threonine 164. The Proton acceptor role is filled by lysine 166. Lysine 168 contributes to the substrate binding site. The Mg(2+) site is built by lysine 192, aspartate 194, and glutamate 195. N6-carboxylysine is present on lysine 192. Histidine 285 serves as the catalytic Proton acceptor. Arginine 286, histidine 318, and serine 370 together coordinate substrate.

It belongs to the RuBisCO large chain family. Type I subfamily. As to quaternary structure, heterohexadecamer of 8 large chains and 8 small chains; disulfide-linked. The disulfide link is formed within the large subunit homodimers. It depends on Mg(2+) as a cofactor. In terms of processing, the disulfide bond which can form in the large chain dimeric partners within the hexadecamer appears to be associated with oxidative stress and protein turnover.

It localises to the plastid. It is found in the chloroplast. The enzyme catalyses 2 (2R)-3-phosphoglycerate + 2 H(+) = D-ribulose 1,5-bisphosphate + CO2 + H2O. The catalysed reaction is D-ribulose 1,5-bisphosphate + O2 = 2-phosphoglycolate + (2R)-3-phosphoglycerate + 2 H(+). RuBisCO catalyzes two reactions: the carboxylation of D-ribulose 1,5-bisphosphate, the primary event in carbon dioxide fixation, as well as the oxidative fragmentation of the pentose substrate in the photorespiration process. Both reactions occur simultaneously and in competition at the same active site. The chain is Ribulose bisphosphate carboxylase large chain from Camassia leichtlinii (Western quamash).